The following is a 233-amino-acid chain: Small ribosomal subunit protein uS3 (233 aa).

The 69-residue stretch at Ile39–Arg107 folds into the KH type-2 domain. The segment covering Met212–Pro222 has biased composition (basic and acidic residues). The disordered stretch occupies residues Met212–Lys233. The span at Lys224–Lys233 shows a compositional bias: basic residues.

Belongs to the universal ribosomal protein uS3 family. Part of the 30S ribosomal subunit. Forms a tight complex with proteins S10 and S14.

Binds the lower part of the 30S subunit head. Binds mRNA in the 70S ribosome, positioning it for translation. The polypeptide is Small ribosomal subunit protein uS3 (Campylobacter jejuni subsp. doylei (strain ATCC BAA-1458 / RM4099 / 269.97)).